We begin with the raw amino-acid sequence, 323 residues long: Cobalamin biosynthesis protein CobD (323 aa).

A run of 5 helical transmembrane segments spans residues 52 to 72, 73 to 93, 154 to 174, 214 to 234, and 294 to 314; these read IAGV…TWLM, VWGS…LLSS, DGII…GMAF, ALLM…AASI, and IRLM…TAAL.

It belongs to the CobD/CbiB family.

Its subcellular location is the cell membrane. It participates in cofactor biosynthesis; adenosylcobalamin biosynthesis. In terms of biological role, converts cobyric acid to cobinamide by the addition of aminopropanol on the F carboxylic group. This is Cobalamin biosynthesis protein CobD from Pelobacter propionicus (strain DSM 2379 / NBRC 103807 / OttBd1).